Consider the following 435-residue polypeptide: Maltodextrin transport system permease protein MdxF (435 aa).

8 consecutive transmembrane segments (helical) span residues 35–55, 73–93, 136–156, 199–219, 234–254, 293–313, 337–357, and 403–423; these read LLFLAITGLFAFELCVFGIQA, FMLIEGTLQLIVTMIFLMFYI, AYIMMVFVIIFPVLVTLFVAL, VIWTICATTLQIILGIVTALF, IFLFPWAVPAFITIMSFSNMF, LIMIQTWLGFPYIYVMVTGVL, HITFPMILFATAPVMITQYTF, and VAAAVTLLISFIVIGISLIAF. In terms of domain architecture, ABC transmembrane type-1 spans 195-422; it reads LGWTVIWTIC…FIVIGISLIA (228 aa).

It belongs to the binding-protein-dependent transport system permease family. MalFG subfamily. The complex is composed of two ATP-binding proteins (MsmX), two transmembrane proteins (MdxF and MdxG) and a solute-binding protein (MdxE).

It localises to the cell membrane. Part of the ABC transporter complex involved in maltodextrin import. Probably responsible for the translocation of the substrate across the membrane. In Bacillus subtilis (strain 168), this protein is Maltodextrin transport system permease protein MdxF (mdxF).